A 192-amino-acid polypeptide reads, in one-letter code: Peroxiredoxin tpx1 (192 aa).

A Thioredoxin domain is found at Leu3 to Phe161. Cys48 functions as the Cysteine sulfenic acid (-SOH) intermediate in the catalytic mechanism. Phosphoserine occurs at positions 105 and 148.

It belongs to the peroxiredoxin family. AhpC/Prx1 subfamily. Homodimer; disulfide-linked, upon oxidation. Interacts with srx1 in response to oxidative stress. Interacts with pap1 via transient disulfide linkages. In terms of processing, the enzyme can be inactivated by further oxidation of the cysteine sulfenic acid (C(P)-SOH) to sulphinic acid (C(P)-SO2H) instead of its condensation to a disulfide bond. It can be reactivated by forming a transient disulfide bond with sulfiredoxin srx1, which reduces the cysteine sulfinic acid in an ATP- and Mg-dependent manner.

The protein localises to the cytoplasm. It is found in the nucleus. The catalysed reaction is a hydroperoxide + [thioredoxin]-dithiol = an alcohol + [thioredoxin]-disulfide + H2O. Functionally, thiol-specific peroxidase that catalyzes the reduction of hydrogen peroxide and organic hydroperoxides to water and alcohols, respectively. Plays a role in cell protection against oxidative stress by detoxifying peroxides and as sensor of hydrogen peroxide-mediated signaling events. Relays hydrogen peroxide as a signal to the transcription factor pap1 by inducing the formation of intramolecular disulfide bonds in pap1, which causes its nuclear accumulation and activation. Reduced by srx1 and this regulation acts as a molecular switch controlling the transcriptional response to hydrogen peroxide. The polypeptide is Peroxiredoxin tpx1 (tpx1) (Schizosaccharomyces pombe (strain 972 / ATCC 24843) (Fission yeast)).